The primary structure comprises 494 residues: NAD(P)H-quinone oxidoreductase subunit 2 B, chloroplastic (494 aa).

The next 13 membrane-spanning stretches (helical) occupy residues 6–26 (LLLFHGGSIFPECILILGLIL), 39–59 (TPWFYFISLTSLVMSITVLLF), 81–101 (IFRFLILLCSTLCIPLSVEYI), 106–126 (MAITEFLLFLLTAALGGMVLC), 131–151 (LVTIFVALECFSLCSYLLSGY), 166–186 (LLMGGASSSILVYGFSWLYGL), 211–231 (ILIALISIAVGIGFKLSLVPF), 277–297 (WHLLLEILAILSMILGNLIAI), 305–325 (MLAYSSMGQIGYIIIGIIAGD), 336–356 (YMLFYIFMNLGTFACIVLFGL), 377–397 (AFSLALCLLSLGGIPPLAGFF), 413–433 (LLVSIGPLMSVISIYYYLKII), and 468–488 (MIVCVTASTTLGIVMNPIIAI).

Belongs to the complex I subunit 2 family. NDH is composed of at least 16 different subunits, 5 of which are encoded in the nucleus.

It localises to the plastid. The protein localises to the chloroplast thylakoid membrane. The catalysed reaction is a plastoquinone + NADH + (n+1) H(+)(in) = a plastoquinol + NAD(+) + n H(+)(out). It catalyses the reaction a plastoquinone + NADPH + (n+1) H(+)(in) = a plastoquinol + NADP(+) + n H(+)(out). Its function is as follows. NDH shuttles electrons from NAD(P)H:plastoquinone, via FMN and iron-sulfur (Fe-S) centers, to quinones in the photosynthetic chain and possibly in a chloroplast respiratory chain. The immediate electron acceptor for the enzyme in this species is believed to be plastoquinone. Couples the redox reaction to proton translocation, and thus conserves the redox energy in a proton gradient. This Cycas taitungensis (Prince sago) protein is NAD(P)H-quinone oxidoreductase subunit 2 B, chloroplastic.